Here is a 225-residue protein sequence, read N- to C-terminus: Uridylate kinase (225 aa).

Position 7 to 11 (7 to 11 (KISGS)) interacts with ATP. G44 contacts UMP. ATP-binding residues include G45 and R49. UMP-binding positions include D66 and 114–120 (FQPGQST). ATP contacts are provided by Y147 and E150.

It belongs to the UMP kinase family. In terms of assembly, homohexamer.

The protein localises to the cytoplasm. The enzyme catalyses UMP + ATP = UDP + ADP. It functions in the pathway pyrimidine metabolism; CTP biosynthesis via de novo pathway; UDP from UMP (UMPK route): step 1/1. With respect to regulation, inhibited by UTP. Catalyzes the reversible phosphorylation of UMP to UDP. This Aeropyrum pernix (strain ATCC 700893 / DSM 11879 / JCM 9820 / NBRC 100138 / K1) protein is Uridylate kinase.